Consider the following 111-residue polypeptide: Universal stress protein B (111 aa).

The next 2 helical transmembrane spans lie at 1–21 (MIST…NMAR) and 90–110 (FILT…LLIW).

Belongs to the universal stress protein B family.

Its subcellular location is the cell inner membrane. The sequence is that of Universal stress protein B from Enterobacter sp. (strain 638).